The sequence spans 93 residues: Protein LSO1 (93 aa).

Residues 1 to 73 (MHNTGKRYSE…TEKLRAKKER (73 aa)) are disordered. The stretch at 20–83 (ARKRRQAYEK…DQLLAAEEEA (64 aa)) forms a coiled coil. Composition is skewed to basic and acidic residues over residues 25 to 49 (QAYE…EEGA) and 57 to 73 (LIME…KKER).

The protein localises to the nucleus. The protein resides in the cytoplasm. In terms of biological role, likely to play a role in iron homeostasis. The polypeptide is Protein LSO1 (Saccharomyces cerevisiae (strain ATCC 204508 / S288c) (Baker's yeast)).